A 381-amino-acid chain; its full sequence is E3 ubiquitin-protein ligase RNF34 (381 aa).

The FYVE-type zinc-finger motif lies at 56–107 (EGPNIVCKACGLSFSVFRKKHVCCDCKKDFCSLCSVSQENLRRCSTCHLLQE). The 20-residue stretch at 115–134 (LMRLKVKDLRQYLLLRNVPT) folds into the SAP 1 domain. Ser169 is subject to Phosphoserine. The segment at 216–261 (LASANTDDEDGEEDDDDDDDDDDEDDDEQEENLEEQNPGLSKKKAR) is disordered. Residues 221 to 249 (TDDEDGEEDDDDDDDDDDEDDDEQEENLE) show a composition bias toward acidic residues. Residues Ser263 and Ser265 each carry the phosphoserine modification. One can recognise an SAP 2 domain in the interval 273 to 287 (VEGMSVRQLKEILAR). The RING-type zinc finger occupies 334-369 (CRICMDAVIDCVLLECGHMVTCTKCGKRMSECPICR).

As to quaternary structure, interacts with CASP8 and CASP10. Interacts with p53/TP53; involved in p53/TP53 ubiquitination. Interacts (via RING-type zinc finger) with MDM2; the interaction stabilizes MDM2. Interacts (via RING-type zinc finger) with PPARGC1A. Interacts with NOD1. Post-translationally, proteolytically cleaved by caspases upon induction of apoptosis by TNF. In terms of processing, autoubiquitinated (in vitro). In terms of tissue distribution, ubiquitous. Detected in brain, cerebellum, midbrain, hippocampus, striatum, heart, lung, kidney, muscle, spleen and testis.

It localises to the cell membrane. The protein resides in the endomembrane system. The protein localises to the nucleus. Its subcellular location is the nucleus speckle. It is found in the cytoplasm. It localises to the cytosol. It catalyses the reaction S-ubiquitinyl-[E2 ubiquitin-conjugating enzyme]-L-cysteine + [acceptor protein]-L-lysine = [E2 ubiquitin-conjugating enzyme]-L-cysteine + N(6)-ubiquitinyl-[acceptor protein]-L-lysine.. It functions in the pathway protein modification; protein ubiquitination. In terms of biological role, E3 ubiquitin-protein ligase that regulates several biological processes through the ubiquitin-mediated proteasomal degradation of various target proteins. Ubiquitinates the caspases CASP8 and CASP10, promoting their proteasomal degradation, to negatively regulate cell death downstream of death domain receptors in the extrinsic pathway of apoptosis. May mediate 'Lys-48'-linked polyubiquitination of RIPK1 and its subsequent proteasomal degradation thereby indirectly regulating the tumor necrosis factor-mediated signaling pathway. Negatively regulates p53/TP53 through its direct ubiquitination and targeting to proteasomal degradation. Indirectly, may also negatively regulate p53/TP53 through ubiquitination and degradation of SFN. Mediates PPARGC1A proteasomal degradation probably through ubiquitination thereby indirectly regulating the metabolism of brown fat cells. Possibly involved in innate immunity, through 'Lys-48'-linked polyubiquitination of NOD1 and its subsequent proteasomal degradation. This is E3 ubiquitin-protein ligase RNF34 from Rattus norvegicus (Rat).